A 353-amino-acid chain; its full sequence is Quinolinate synthase (353 aa).

The iminosuccinate site is built by H47 and S68. C113 contacts [4Fe-4S] cluster. Residues Y139–N141 and S156 each bind iminosuccinate. Position 200 (C200) interacts with [4Fe-4S] cluster. Residues H226 to E228 and T243 each bind iminosuccinate. C297 is a binding site for [4Fe-4S] cluster.

Belongs to the quinolinate synthase family. Type 1 subfamily. [4Fe-4S] cluster is required as a cofactor.

The protein localises to the cytoplasm. It carries out the reaction iminosuccinate + dihydroxyacetone phosphate = quinolinate + phosphate + 2 H2O + H(+). Its pathway is cofactor biosynthesis; NAD(+) biosynthesis; quinolinate from iminoaspartate: step 1/1. Its function is as follows. Catalyzes the condensation of iminoaspartate with dihydroxyacetone phosphate to form quinolinate. This is Quinolinate synthase from Yersinia pestis bv. Antiqua (strain Nepal516).